The sequence spans 321 residues: Ubiquinone biosynthesis protein COQ4, mitochondrial (321 aa).

Residues His205, Asp206, His209, and Glu221 each contribute to the Zn(2+) site.

The protein belongs to the COQ4 family. In terms of assembly, component of a multi-subunit COQ enzyme complex, composed of at least COQ3, COQ4, COQ5, COQ6, COQ7 and COQ9. Zn(2+) is required as a cofactor.

The protein localises to the mitochondrion inner membrane. It carries out the reaction a 4-hydroxy-3-methoxy-5-(all-trans-polyprenyl)benzoate + H(+) = a 2-methoxy-6-(all-trans-polyprenyl)phenol + CO2. Its pathway is cofactor biosynthesis; ubiquinone biosynthesis. In terms of biological role, lyase that catalyzes the C1-decarboxylation of 4-hydroxy-3-methoxy-5-(all-trans-polyprenyl)benzoic acid into 2-methoxy-6-(all-trans-polyprenyl)phenol during ubiquinone biosynthesis. This Candida tropicalis (strain ATCC MYA-3404 / T1) (Yeast) protein is Ubiquinone biosynthesis protein COQ4, mitochondrial.